A 142-amino-acid polypeptide reads, in one-letter code: Large ribosomal subunit protein uL11 (142 aa).

Belongs to the universal ribosomal protein uL11 family. In terms of assembly, part of the ribosomal stalk of the 50S ribosomal subunit. Interacts with L10 and the large rRNA to form the base of the stalk. L10 forms an elongated spine to which L12 dimers bind in a sequential fashion forming a multimeric L10(L12)X complex. Post-translationally, one or more lysine residues are methylated.

In terms of biological role, forms part of the ribosomal stalk which helps the ribosome interact with GTP-bound translation factors. This is Large ribosomal subunit protein uL11 from Haemophilus influenzae (strain PittGG).